We begin with the raw amino-acid sequence, 258 residues long: Indole-3-glycerol phosphate synthase (258 aa).

It belongs to the TrpC family.

The enzyme catalyses 1-(2-carboxyphenylamino)-1-deoxy-D-ribulose 5-phosphate + H(+) = (1S,2R)-1-C-(indol-3-yl)glycerol 3-phosphate + CO2 + H2O. The protein operates within amino-acid biosynthesis; L-tryptophan biosynthesis; L-tryptophan from chorismate: step 4/5. In Geobacillus sp. (strain WCH70), this protein is Indole-3-glycerol phosphate synthase.